The sequence spans 62 residues: Large ribosomal subunit protein uL29 (62 aa).

The protein belongs to the universal ribosomal protein uL29 family.

This chain is Large ribosomal subunit protein uL29, found in Acholeplasma laidlawii (strain PG-8A).